A 539-amino-acid polypeptide reads, in one-letter code: Acid-sensing ion channel 4 (539 aa).

The Cytoplasmic segment spans residues 1 to 68; it reads MPIEIVCKIK…GPGPHGLRRT (68 aa). The chain crosses the membrane as a helical span at residues 69–89; sequence LWALALLTSLAAFLYQAAGLA. The Extracellular portion of the chain corresponds to 90–438; sequence RGYLTRPHLV…EQRAAYGLSA (349 aa). 2 disulfide bridges follow: C118–C202 and C180–C187. N-linked (GlcNAc...) asparagine glycosylation is found at N191 and N243. Cystine bridges form between C296–C375, C318–C371, C322–C369, C331–C353, and C333–C345. The N-linked (GlcNAc...) asparagine glycan is linked to N376. A helical transmembrane segment spans residues 439–459; it reads LLGDLGGQMGLFIGASILTLL. The GAS motif; ion selectivity filter motif lies at 452–454; that stretch reads GAS. The Cytoplasmic portion of the chain corresponds to 460 to 539; sequence EILDYIYEVS…PGGLFEDFAC (80 aa). Residues 501 to 531 form a disordered region; that stretch reads EQSPCPSRGRVEGGGVSSLLPNHHHPHGPPG.

It belongs to the amiloride-sensitive sodium channel (TC 1.A.6) family. ASIC4 subfamily. In terms of assembly, homotrimer. Heterotrimer; with other ASIC proteins producing functional channels. Expressed in pituitary gland. Weakly expressed in brain, vestibular system and organ of Corti.

It is found in the cell membrane. In terms of biological role, does not exhibit measurable stand-alone pH-gated sodium channel activity but may form pH-gated heterotrimeric sodium channels. Its activity could also depend on alternative gating mechanisms. This is Acid-sensing ion channel 4 from Homo sapiens (Human).